Consider the following 364-residue polypeptide: tRNA N6-adenosine threonylcarbamoyltransferase (364 aa).

Residues His-118 and His-122 each contribute to the Fe cation site. Substrate contacts are provided by residues 140–144 (LVSGG), Asp-173, Gly-186, and Asn-288. Asp-316 is a Fe cation binding site.

The protein belongs to the KAE1 / TsaD family. The cofactor is Fe(2+).

It localises to the cytoplasm. The catalysed reaction is L-threonylcarbamoyladenylate + adenosine(37) in tRNA = N(6)-L-threonylcarbamoyladenosine(37) in tRNA + AMP + H(+). In terms of biological role, required for the formation of a threonylcarbamoyl group on adenosine at position 37 (t(6)A37) in tRNAs that read codons beginning with adenine. Is involved in the transfer of the threonylcarbamoyl moiety of threonylcarbamoyl-AMP (TC-AMP) to the N6 group of A37, together with TsaE and TsaB. TsaD likely plays a direct catalytic role in this reaction. This Cereibacter sphaeroides (strain KD131 / KCTC 12085) (Rhodobacter sphaeroides) protein is tRNA N6-adenosine threonylcarbamoyltransferase.